A 78-amino-acid polypeptide reads, in one-letter code: ATP synthase subunit a (78 aa).

The next 3 helical transmembrane spans lie at 13-33 (LFGN…LGTS), 35-55 (FLGA…GMFI), and 57-77 (SLQA…KVEA).

It belongs to the ATPase A chain family. F-type ATPases have 2 components, CF(1) - the catalytic core - and CF(0) - the membrane proton channel. CF(1) has five subunits: alpha(3), beta(3), gamma(1), delta(1), epsilon(1). CF(0) has three main subunits: a(1), b(2) and c(9-12). The alpha and beta chains form an alternating ring which encloses part of the gamma chain. CF(1) is attached to CF(0) by a central stalk formed by the gamma and epsilon chains, while a peripheral stalk is formed by the delta and b chains.

It is found in the cell membrane. Key component of the proton channel; it plays a direct role in the translocation of protons across the membrane. This chain is ATP synthase subunit a (atpB), found in Alkalihalobacillus alcalophilus (Bacillus alcalophilus).